Here is a 186-residue protein sequence, read N- to C-terminus: Ribosome-recycling factor (186 aa).

This sequence belongs to the RRF family.

It localises to the cytoplasm. Its function is as follows. Responsible for the release of ribosomes from messenger RNA at the termination of protein biosynthesis. May increase the efficiency of translation by recycling ribosomes from one round of translation to another. The sequence is that of Ribosome-recycling factor from Cupriavidus necator (strain ATCC 17699 / DSM 428 / KCTC 22496 / NCIMB 10442 / H16 / Stanier 337) (Ralstonia eutropha).